Reading from the N-terminus, the 460-residue chain is Probable protein phosphatase 2C 38 (460 aa).

Disordered regions lie at residues 1–30 (MVAVTGGRPPGLQDAPGAPPPAPAAEAVPS) and 83–111 (RPMRRRRRGGSSSSSSSPRDREPRDGRIA). Basic and acidic residues predominate over residues 100–109 (PRDREPRDGR). Residues 118 to 432 (AASLYTMRGN…DDCAVVCLFL (315 aa)) form the PPM-type phosphatase domain. Positions 154 and 155 each coordinate Mn(2+). Positions 192–219 (VTSSMTEGGGTERMDRDTETPLGTEENG) are disordered. Over residues 201 to 210 (GTERMDRDTE) the composition is skewed to basic and acidic residues. Positions 377 and 423 each coordinate Mn(2+).

It belongs to the PP2C family. It depends on Mg(2+) as a cofactor. The cofactor is Mn(2+).

It catalyses the reaction O-phospho-L-seryl-[protein] + H2O = L-seryl-[protein] + phosphate. The catalysed reaction is O-phospho-L-threonyl-[protein] + H2O = L-threonyl-[protein] + phosphate. The chain is Probable protein phosphatase 2C 38 from Oryza sativa subsp. japonica (Rice).